We begin with the raw amino-acid sequence, 365 residues long: Testis-specific serine/threonine-protein kinase 1 (365 aa).

The region spanning 12-272 (YIMGINLGEG…IDEILNHCWV (261 aa)) is the Protein kinase domain. ATP is bound by residues 18-26 (LGEGSYAKV) and K41. Residue D136 is the Proton acceptor of the active site. The residue at position 174 (T174) is a Phosphothreonine. The disordered stretch occupies residues 282-365 (GAINKEGESS…HPQQPSETHT (84 aa)). The span at 303-330 (GADKKSATKLEPREEARSEARSESKPQE) shows a compositional bias: basic and acidic residues. The segment covering 331–347 (DTLQVVRQSENVGLSSE) has biased composition (polar residues).

Belongs to the protein kinase superfamily. CAMK Ser/Thr protein kinase family. As to quaternary structure, interacts with TSSK2. Interacts with HSP90; this interaction stabilizes TSSK1. The cofactor is Mg(2+). Post-translationally, autophosphorylated. In terms of processing, ubiquitinated; HSP90 activity negatively regulates ubiquitination and degradation. As to expression, testis-specific. Expressed only in postmeiotic spermatids at the final stages of cytodifferentiation in the seminiferous tubules (at protein level). Not detected in released sperms in the lumen of the seminiferous tubules and the epididymis.

The protein resides in the cytoplasm. The protein localises to the cytoplasmic vesicle. Its subcellular location is the secretory vesicle. It is found in the acrosome. It localises to the cell projection. The protein resides in the cilium. The protein localises to the flagellum. The enzyme catalyses L-seryl-[protein] + ATP = O-phospho-L-seryl-[protein] + ADP + H(+). It catalyses the reaction L-threonyl-[protein] + ATP = O-phospho-L-threonyl-[protein] + ADP + H(+). Its activity is regulated as follows. Activated by phosphorylation on Thr-174, potentially by autophosphorylation. In terms of biological role, testis-specific serine/threonine-protein kinase required during spermatid development. Phosphorylates 'Ser-281' of TSKS. Involved in the late stages of spermatogenesis, during the reconstruction of the cytoplasm. During spermatogenesis, required for the transformation of a ring-shaped structure around the base of the flagellum originating from the chromatoid body. The sequence is that of Testis-specific serine/threonine-protein kinase 1 (Tssk1b) from Mus musculus (Mouse).